Reading from the N-terminus, the 203-residue chain is Recombination protein RecR (203 aa).

A C4-type zinc finger spans residues 56-71 (CAVCGNVSDDERCRIC). One can recognise a Toprim domain in the interval 79 to 179 (ALVCVVEEPK…TVTRIASGLP (101 aa)).

It belongs to the RecR family.

May play a role in DNA repair. It seems to be involved in an RecBC-independent recombinational process of DNA repair. It may act with RecF and RecO. This chain is Recombination protein RecR, found in Mycobacterium ulcerans (strain Agy99).